The following is a 346-amino-acid chain: 4-hydroxy-2-oxohexanoate aldolase (346 aa).

Positions 7 to 259 constitute a Pyruvate carboxyltransferase domain; that stretch reads VRITDTSLRD…KTGIDFFDIA (253 aa). A substrate-binding site is contributed by 15–16; sequence RD. Asp-16 is a Mn(2+) binding site. His-19 (proton acceptor) is an active-site residue. 2 residues coordinate substrate: Ser-169 and His-198. 2 residues coordinate Mn(2+): His-198 and His-200. Tyr-289 provides a ligand contact to substrate.

Belongs to the 4-hydroxy-2-oxovalerate aldolase family. In terms of assembly, homodimer. Forms a heterotetramer composed of two aldolase (HsaF) and two dehydrogenase (HsaG) subunits. Mn(2+) serves as cofactor.

The enzyme catalyses (S)-4-hydroxy-2-oxohexanoate = propanal + pyruvate. It catalyses the reaction (S)-4-hydroxy-2-oxopentanoate = acetaldehyde + pyruvate. Its function is as follows. Involved in cholesterol degradation. Catalyzes the retro-aldol cleavage of 4-hydroxy-2-oxohexanoate (HOHA) to pyruvate and propanal. Can also catalyze the cleavage of 4-hydroxy-2-oxopentanoate (HOPA) to pyruvate and acetaldehyde. The aldehydes produced by this reaction are directly channeled to the dehydrogenase HsaG. This Mycobacterium bovis (strain ATCC BAA-935 / AF2122/97) protein is 4-hydroxy-2-oxohexanoate aldolase.